The following is a 516-amino-acid chain: Probable D,D-dipeptide-binding periplasmic protein DdpA (516 aa).

The signal sequence occupies residues 1–25; sequence MKRSISFRPTLLALVLATNFPVAHA.

The protein belongs to the bacterial solute-binding protein 5 family. As to quaternary structure, the complex is composed of two ATP-binding proteins (DdpD and DdpF), two transmembrane proteins (DdpB and DdpC) and a solute-binding protein (DdpA).

The protein resides in the periplasm. Its function is as follows. Part of the ABC transporter complex DdpABCDF, which is probably involved in D,D-dipeptide transport. The chain is Probable D,D-dipeptide-binding periplasmic protein DdpA (ddpA) from Escherichia coli (strain K12).